The chain runs to 297 residues: MDLVNHLTDRLLFAIPKKGRLYSKSVSILNGADITFHRSQRLDIALSTSLPVALVFLPAADIPTFVGEGKCDLGITGVDQVRESNVDVDLAIDLQFGNCKLQVQVPVNGEYKKPEQLIGKTIVTSFVKLAEKYFADLEGTTVEKMTTRIKFVSGSVEASCALGIGDAIVDLVESGETMRAAGLVDIATVLSTSAYLIESKNPKSDKSLIATIKSRIEGVMTAQRFVSCIYNAPEDKLPELLKVTPGRRAPTISKIDDEGWVAVSSMIERKTKGVVLDELKRLGASDIMVFEISNCRV.

An N-acetylmethionine modification is found at Met1.

The protein belongs to the ATP phosphoribosyltransferase family.

Its subcellular location is the cytoplasm. It catalyses the reaction 1-(5-phospho-beta-D-ribosyl)-ATP + diphosphate = 5-phospho-alpha-D-ribose 1-diphosphate + ATP. The protein operates within amino-acid biosynthesis; L-histidine biosynthesis; L-histidine from 5-phospho-alpha-D-ribose 1-diphosphate: step 1/9. Catalyzes the condensation of ATP and 5-phosphoribose 1-diphosphate to form N'-(5'-phosphoribosyl)-ATP (PR-ATP). Has a crucial role in the pathway because the rate of histidine biosynthesis seems to be controlled primarily by regulation of the enzymatic activity. This Saccharomyces cerevisiae (strain ATCC 204508 / S288c) (Baker's yeast) protein is ATP phosphoribosyltransferase (HIS1).